The chain runs to 1496 residues: Chromosome partition protein MukB (1496 aa).

63-70 (GGNGAGKS) serves as a coordination point for ATP. 2 coiled-coil regions span residues 328–493 (KLEL…QRLS) and 536–632 (KMQA…APAW). Positions 694–811 (PDGSDDVRLN…EVPLFGRAAR (118 aa)) are flexible hinge. 2 coiled-coil regions span residues 861 to 1171 (NPEE…SAEE) and 1235 to 1291 (IDAI…LQNI). Residues 1082–1091 (RARSRRDELQ) show a composition bias toward basic and acidic residues. The disordered stretch occupies residues 1082 to 1101 (RARSRRDELQQRLSQQRSRK).

Belongs to the SMC family. MukB subfamily. In terms of assembly, homodimerization via its hinge domain. Binds to DNA via its C-terminal region. Interacts, and probably forms a ternary complex, with MukE and MukF via its C-terminal region. The complex formation is stimulated by calcium or magnesium. Interacts with tubulin-related protein FtsZ.

It is found in the cytoplasm. Its subcellular location is the nucleoid. Functionally, plays a central role in chromosome condensation, segregation and cell cycle progression. Functions as a homodimer, which is essential for chromosome partition. Involved in negative DNA supercoiling in vivo, and by this means organize and compact chromosomes. May achieve or facilitate chromosome segregation by condensation DNA from both sides of a centrally located replisome during cell division. This chain is Chromosome partition protein MukB, found in Actinobacillus pleuropneumoniae serotype 7 (strain AP76).